A 246-amino-acid polypeptide reads, in one-letter code: 2-C-methyl-D-erythritol 4-phosphate cytidylyltransferase (246 aa).

Belongs to the IspD/TarI cytidylyltransferase family. IspD subfamily.

The enzyme catalyses 2-C-methyl-D-erythritol 4-phosphate + CTP + H(+) = 4-CDP-2-C-methyl-D-erythritol + diphosphate. It functions in the pathway isoprenoid biosynthesis; isopentenyl diphosphate biosynthesis via DXP pathway; isopentenyl diphosphate from 1-deoxy-D-xylulose 5-phosphate: step 2/6. Its function is as follows. Catalyzes the formation of 4-diphosphocytidyl-2-C-methyl-D-erythritol from CTP and 2-C-methyl-D-erythritol 4-phosphate (MEP). The polypeptide is 2-C-methyl-D-erythritol 4-phosphate cytidylyltransferase (Chlorobaculum tepidum (strain ATCC 49652 / DSM 12025 / NBRC 103806 / TLS) (Chlorobium tepidum)).